We begin with the raw amino-acid sequence, 534 residues long: Bifunctional purine biosynthesis protein PurH (534 aa).

Residues 6-151 (TRLPVRRALI…KNHKDVAIVV (146 aa)) form the MGS-like domain.

This sequence belongs to the PurH family.

It carries out the reaction (6R)-10-formyltetrahydrofolate + 5-amino-1-(5-phospho-beta-D-ribosyl)imidazole-4-carboxamide = 5-formamido-1-(5-phospho-D-ribosyl)imidazole-4-carboxamide + (6S)-5,6,7,8-tetrahydrofolate. The catalysed reaction is IMP + H2O = 5-formamido-1-(5-phospho-D-ribosyl)imidazole-4-carboxamide. The protein operates within purine metabolism; IMP biosynthesis via de novo pathway; 5-formamido-1-(5-phospho-D-ribosyl)imidazole-4-carboxamide from 5-amino-1-(5-phospho-D-ribosyl)imidazole-4-carboxamide (10-formyl THF route): step 1/1. It participates in purine metabolism; IMP biosynthesis via de novo pathway; IMP from 5-formamido-1-(5-phospho-D-ribosyl)imidazole-4-carboxamide: step 1/1. The protein is Bifunctional purine biosynthesis protein PurH of Stutzerimonas stutzeri (strain A1501) (Pseudomonas stutzeri).